The sequence spans 686 residues: Pentatricopeptide repeat-containing protein At4g08210 (686 aa).

PPR repeat units follow at residues 4–38 (DLKL…GISQ), 39–69 (NVFI…MSER), 70–104 (NIVT…EEEA), 106–140 (NEFM…NLRG), 141–171 (DVVL…ILRP), 172–206 (SSTS…NVVS), 207–236 (WNCL…GLVL), 237–271 (DGFA…GLES), 272–302 (SPFA…EKLA), 306–340 (SVAV…DLCF), 341–375 (DSYT…GYEL), 376–406 (DYIV…LPNK), 407–441 (DIIA…GLDA), 442–476 (DQFI…GYES), 477–507 (EPVT…MLER), 508–542 (DVVS…GIEP), 543–573 (NKVT…MKSE), and 579–609 (YLEH…MPLE). Residues 614–686 (IWTSLLTACG…AKESGMSWII (73 aa)) are type E motif; degenerate.

The protein belongs to the PPR family. PCMP-E subfamily.

The sequence is that of Pentatricopeptide repeat-containing protein At4g08210 (PCMP-E100) from Arabidopsis thaliana (Mouse-ear cress).